A 473-amino-acid polypeptide reads, in one-letter code: Photosystem II CP43 reaction center protein (473 aa).

Positions M1–E14 are excised as a propeptide. An N-acetylthreonine modification is found at T15. A Phosphothreonine modification is found at T15. Transmembrane regions (helical) follow at residues L69–A93, L134–N155, K178–T200, K255–S275, and W291–A312. E367 provides a ligand contact to [CaMn4O5] cluster. Residues R447–P471 form a helical membrane-spanning segment.

Belongs to the PsbB/PsbC family. PsbC subfamily. As to quaternary structure, PSII is composed of 1 copy each of membrane proteins PsbA, PsbB, PsbC, PsbD, PsbE, PsbF, PsbH, PsbI, PsbJ, PsbK, PsbL, PsbM, PsbT, PsbX, PsbY, PsbZ, Psb30/Ycf12, at least 3 peripheral proteins of the oxygen-evolving complex and a large number of cofactors. It forms dimeric complexes. Binds multiple chlorophylls and provides some of the ligands for the Ca-4Mn-5O cluster of the oxygen-evolving complex. It may also provide a ligand for a Cl- that is required for oxygen evolution. PSII binds additional chlorophylls, carotenoids and specific lipids. serves as cofactor.

The protein resides in the plastid. It localises to the chloroplast thylakoid membrane. One of the components of the core complex of photosystem II (PSII). It binds chlorophyll and helps catalyze the primary light-induced photochemical processes of PSII. PSII is a light-driven water:plastoquinone oxidoreductase, using light energy to abstract electrons from H(2)O, generating O(2) and a proton gradient subsequently used for ATP formation. The sequence is that of Photosystem II CP43 reaction center protein from Capsella bursa-pastoris (Shepherd's purse).